Reading from the N-terminus, the 79-residue chain is RNA-binding protein Hfq (79 aa).

A Sm domain is found at 10–69 (GPFLNALRKEHVPVSIYLVNGIKLQGNIESFDQYVVLLRNTVTQMVYKHAISTVVPARAV).

Belongs to the Hfq family. Homohexamer.

Its function is as follows. RNA chaperone that binds small regulatory RNA (sRNAs) and mRNAs to facilitate mRNA translational regulation in response to envelope stress, environmental stress and changes in metabolite concentrations. Also binds with high specificity to tRNAs. This Cupriavidus necator (strain ATCC 17699 / DSM 428 / KCTC 22496 / NCIMB 10442 / H16 / Stanier 337) (Ralstonia eutropha) protein is RNA-binding protein Hfq.